The following is a 484-amino-acid chain: Aspartyl/glutamyl-tRNA(Asn/Gln) amidotransferase subunit B (484 aa).

Belongs to the GatB/GatE family. GatB subfamily. Heterotrimer of A, B and C subunits.

It carries out the reaction L-glutamyl-tRNA(Gln) + L-glutamine + ATP + H2O = L-glutaminyl-tRNA(Gln) + L-glutamate + ADP + phosphate + H(+). It catalyses the reaction L-aspartyl-tRNA(Asn) + L-glutamine + ATP + H2O = L-asparaginyl-tRNA(Asn) + L-glutamate + ADP + phosphate + 2 H(+). Allows the formation of correctly charged Asn-tRNA(Asn) or Gln-tRNA(Gln) through the transamidation of misacylated Asp-tRNA(Asn) or Glu-tRNA(Gln) in organisms which lack either or both of asparaginyl-tRNA or glutaminyl-tRNA synthetases. The reaction takes place in the presence of glutamine and ATP through an activated phospho-Asp-tRNA(Asn) or phospho-Glu-tRNA(Gln). The sequence is that of Aspartyl/glutamyl-tRNA(Asn/Gln) amidotransferase subunit B from Dechloromonas aromatica (strain RCB).